The following is a 136-amino-acid chain: Large ribosomal subunit protein eL27 (136 aa).

The KOW domain occupies 5-40 (MKPGKVVMVLAGRYAGRKAVIVKNIDDGTADRPYSH).

It belongs to the eukaryotic ribosomal protein eL27 family. As to quaternary structure, component of the large ribosomal subunit.

It is found in the cytoplasm. The protein localises to the cytosol. Its subcellular location is the rough endoplasmic reticulum. Its function is as follows. Component of the large ribosomal subunit. This is Large ribosomal subunit protein eL27 (rpl27) from Hippocampus comes (Tiger tail seahorse).